A 207-amino-acid chain; its full sequence is Uracil phosphoribosyltransferase (207 aa).

5-phospho-alpha-D-ribose 1-diphosphate contacts are provided by residues R77, R102, and 129–137 (DPMLATGGS). Residues I192 and 197 to 199 (GDA) contribute to the uracil site. Residue D198 coordinates 5-phospho-alpha-D-ribose 1-diphosphate.

The protein belongs to the UPRTase family. Requires Mg(2+) as cofactor.

The catalysed reaction is UMP + diphosphate = 5-phospho-alpha-D-ribose 1-diphosphate + uracil. It participates in pyrimidine metabolism; UMP biosynthesis via salvage pathway; UMP from uracil: step 1/1. Allosterically activated by GTP. Functionally, catalyzes the conversion of uracil and 5-phospho-alpha-D-ribose 1-diphosphate (PRPP) to UMP and diphosphate. The protein is Uracil phosphoribosyltransferase of Mycobacterium marinum (strain ATCC BAA-535 / M).